We begin with the raw amino-acid sequence, 146 residues long: Hemoglobin subunit beta-2 (146 aa).

Positions 2–146 (HWSAEEKQLI…VAHALARRYH (145 aa)) constitute a Globin domain. Residues H63 and H92 each contribute to the heme b site.

Belongs to the globin family. Heterotetramer of two alpha chains and two beta chains. Red blood cells.

Its function is as follows. Involved in oxygen transport from the lung to the various peripheral tissues. This Naja naja (Indian cobra) protein is Hemoglobin subunit beta-2 (HBB2).